The sequence spans 942 residues: Mitogen-activated protein kinase kinase kinase 14 (942 aa).

Residues 136-152 (GKRHGKARKKRRKKRSK) show a composition bias toward basic residues. Disordered stretches follow at residues 136–156 (GKRHGKARKKRRKKRSKSLAQ) and 291–326 (VSGQRPLPGPPHLSQLAHGDSQKPLPGPHLESSCPS). The Protein kinase domain maps to 402–657 (MTHQPRVGRG…ELRRKVGKAL (256 aa)). Positions 403 to 655 (THQPRVGRGS…AMELRRKVGK (253 aa)) are interaction with ZFP91. ATP-binding positions include 408–416 (VGRGSFGEV) and Lys-431. The Proton acceptor role is filled by Asp-517. Thr-561 carries the post-translational modification Phosphothreonine. Disordered stretches follow at residues 660–756 (VGGL…FPDR) and 801–823 (SDDSEKNPSKASQSSRDTLSSGV). The segment covering 707–720 (EPQPPLPPEPPEPS) has biased composition (pro residues). A compositionally biased stretch (polar residues) spans 809-823 (SKASQSSRDTLSSGV).

The protein belongs to the protein kinase superfamily. STE Ser/Thr protein kinase family. MAP kinase kinase kinase subfamily. In terms of assembly, interacts with TRAF2, TRAF3, TRAF5, TRAF6, IKKA and NF-kappa-B2/P100. Interacts with PELI3. Interacts with NIBP; the interaction is direct. Interacts with ARRB1 and ARRB2. Interacts with GRB10. Interacts with ZFP91. Interacts with NLRP12; this interaction promotes proteasomal degradation of MAP3K14. Directly interacts with DDX3X. Interacts (via C-terminus and kinase domain) with PPPC3A (via N-terminus) and PPP3CB. Phosphorylation at Thr-561 is required to activate its kinase activity and 'Lys-63'-linked polyubiquitination. Phosphorylated by CHUK/IKKA leading to MAP3K14 destabilization. Autophosphorylated. In terms of processing, ubiquitinated. Undergoes both 'Lys-48'- and 'Lys-63'-linked polyubiquitination. 'Lys-48'-linked polyubiquitination leads to its degradation by the proteasome, while 'Lys-63'-linked polyubiquitination stabilizes and activates it.

The protein resides in the cytoplasm. The enzyme catalyses L-seryl-[protein] + ATP = O-phospho-L-seryl-[protein] + ADP + H(+). It carries out the reaction L-threonyl-[protein] + ATP = O-phospho-L-threonyl-[protein] + ADP + H(+). Its function is as follows. Lymphotoxin beta-activated kinase which seems to be exclusively involved in the activation of NF-kappa-B and its transcriptional activity. Phosphorylates CHUK/IKKA. Promotes proteolytic processing of NFKB2/P100, which leads to activation of NF-kappa-B via the non-canonical pathway. Has an essential role in the non-canonical NF-kappa-B signalining that regulates genes encoding molecules involved in B-cell survival, lymphoid organogenesis, and immune response. Could act in a receptor-selective manner. The polypeptide is Mitogen-activated protein kinase kinase kinase 14 (Mus musculus (Mouse)).